We begin with the raw amino-acid sequence, 321 residues long: MIKKIAVLTSGGDAPGMNAAIRGVVRSALAEGLEVFGIYDGYQGLYNNKIKQLNRYSVSDVINRGGTFLGSARFPEFKDPNVRAKCAEILRSHGIDALVVIGGDGSYMGAKLLTEEHGFPCVGLPGTIDNDVAGTDYTIGYQTALQTAVDAIDRLRDTSSSHQRISIVEIMGRHCSDLTISAGIAGGCEYIVASEIEFNREELIQQIERSIIRGKRHAIIAITELLTDVHSLAKEIEARVGHETRATVLGHIQRGGSPCAFDRILASRMGAYAVDLLLQGKGGYCVGIQNEQLVHHDIIDAINNMQRVFKADWLKVAKRLE.

Residue glycine 12 coordinates ATP. ADP-binding positions include arginine 22–arginine 26 and arginine 55–aspartate 60. Residues arginine 73–phenylalanine 74 and glycine 103–serine 106 each bind ATP. Aspartate 104 serves as a coordination point for Mg(2+). A substrate-binding site is contributed by threonine 127 to aspartate 129. Catalysis depends on aspartate 129, which acts as the Proton acceptor. Arginine 156 contacts ADP. Residues arginine 164 and methionine 171–arginine 173 contribute to the substrate site. ADP contacts are provided by residues glycine 187–glutamate 189, arginine 213, and lysine 215–histidine 217. Substrate contacts are provided by residues glutamate 224, arginine 245, and histidine 251–arginine 254.

It belongs to the phosphofructokinase type A (PFKA) family. ATP-dependent PFK group I subfamily. Prokaryotic clade 'B1' sub-subfamily. Homotetramer. It depends on Mg(2+) as a cofactor.

The protein resides in the cytoplasm. It catalyses the reaction beta-D-fructose 6-phosphate + ATP = beta-D-fructose 1,6-bisphosphate + ADP + H(+). The protein operates within carbohydrate degradation; glycolysis; D-glyceraldehyde 3-phosphate and glycerone phosphate from D-glucose: step 3/4. With respect to regulation, allosterically activated by ADP and other diphosphonucleosides, and allosterically inhibited by phosphoenolpyruvate. Functionally, catalyzes the phosphorylation of D-fructose 6-phosphate to fructose 1,6-bisphosphate by ATP, the first committing step of glycolysis. This chain is ATP-dependent 6-phosphofructokinase, found in Haemophilus influenzae (strain 86-028NP).